The following is a 500-amino-acid chain: Pentatricopeptide repeat-containing protein At1g06580 (500 aa).

12 PPR repeats span residues 78–112, 113–147, 148–182, 183–217, 218–252, 253–287, 288–322, 323–357, 358–392, 393–427, 428–462, and 463–498; these read SIVDFSRLLIAIAKLNKYEAVISLFRHLEMLGISH, DLYSFTTLIDCFCRCARLSLALSCLGKMMKLGFEP, SIVTFGSLVNGFCHVNRFYEAMSLVDQIVGLGYEP, NVVIYNTIIDSLCEKGQVNTALDVLKHMKKMGIRP, DVVTYNSLITRLFHSGTWGVSARILSDMMRMGISP, DVITFSALIDVYGKEGQLLEAKKQYNEMIQRSVNP, NIVTYNSLINGLCIHGLLDEAKKVLNVLVSKGFFP, NAVTYNTLINGYCKAKRVDDGMKILCVMSRDGVDG, DTFTYNTLYQGYCQAGKFSAAEKVLGRMVSCGVHP, DMYTFNILLDGLCDHGKIGKALVRLEDLQKSKTVV, GIITYNIIIKGLCKADKVEDAWYLFCSLALKGVSP, and DVITYITMMIGLRRKRLWREAHELYRKMQKEDGLMP.

This sequence belongs to the PPR family. P subfamily.

This is Pentatricopeptide repeat-containing protein At1g06580 from Arabidopsis thaliana (Mouse-ear cress).